A 1704-amino-acid polypeptide reads, in one-letter code: MNRLRQFSLLLWKDWVLLRRNKVWTLFELIIPCLLLGPLVYLVVKNADHTSSPENIYDNFQVKGTVEDVFLESNFIKPIYKRWCLRSDVVVGYTSKDAAAKRTVDDLMKKFAERFQSAKLKLSVKNESSEEQLLTVLRNDLPMLNETFCAINSYAAGVVFDEVDVTNKKLNYRILLGKTPEETWHLTETSYNPYGPSSGRYSRIPSSPPYWTSAFLTFQHAIESSFLSSVQSGAPDLPITLRGLPEPRYKTSSVSAFIDFFPFIWAFVTFINVIHITREIAAENHAVKPYLTAMGLSTFMFYAAHVVMAFLKFFVIFLCSIIPLTFVMEFVSPAALIVTVLMYGLGAVIFGAFVASFFNNTNSAIKAILVAWGAMIGISYKLRPELDQISSCFLYGLNINGAFALAVEAISDYMRRERELNLTNMFNDSSLHFSLGWALVMMIVDILWMSIGALVVDHIRTSADFSLRTLFDFEAPEDDENQTDGVTAQNTRINEQVRNRVRRSDMEIQMNPMASTSLNPPNADSDSLLEGSTEADGARDTARADIIVRNLVKIWSTTGERAVDGLSLRAVRGQCSILLGHNGAGKSTTFSSIAGIIRPTNGRITICGYDVGNEPGETRRHIGMCPQYNPLYDQLTVSEHLKLVYGLKGAREKDFKQDMKRLLSDVKLDFKENEKAVNLSGGMKRKLCVCMALIGDSEVVLLDEPTAGMDPGARQDVQKLVEREKANRTILLTTHYMDEAERLGDWVFIMSHGKLVASGTNQYLKQKFGTGYLLTVVLDHNGDKRKMAVILTDVCTHYVKEAERGEMHGQQIEIILPEARKKEFVPLFQALEAIQDRNYRSNVFDNMPNTLKSQLATLEMRSFGLSLNTLEQVFITIGDKVDKAIASRQNSRISHNSRNASEPSLKPAGYDTQSSTKSADSYQKLMDSQARGPEKSGVAKMVAQFISIMRKKFLYSRRNWAQLFTQVLIPIILLGLVGSLTTLKSNNTDQFSVRSLTPSGIEPSKVVWRFENGTIPEEAANFEKILRKSGGFEVLNYNTKNPLPNITKSLIGEMPPATIGMTMNSDNLEALFNMRYYHVLPTLISMINRARLTGTVDAEISSGVFLYSKSTSNSNLLPSQLIDVLLAPMLILIFAMVTSTFVMFLIEERTCQFAHQQFLTGISPITFYSASLIYDGILYSLICLIFLFMFLAFHWMYDHLAIVILFWFLYFFSSVPFIYAVSFLFQSPSKANVLLIIWQVVISGAALLAVFLIFMIFNIDEWLKSILVNIFMFLLPSYAFGSAIITINTYGMILPSEELMNWDHCGKNAWLMGTFGVCSFALFVLLQFKFVRRFLSQVWTVRRSSHNNVQPMMGDLPVCESVSEERERVHRVNSQNSALVIKDLTKTFGRFTAVNELCLAVDQKECFGLLGVNGAGKTTTFNILTGQSFASSGEAMIGGRDVTELISIGYCPQFDALMLDLTGRESLEILAQMHGFENYKAKAELILECVGMIAHADKLVRFYSGGQKRKISVGVALLAPTQMIILDEPTAGIDPKARREVWELLLWCREHSNSALMLTSHSMDECEALCSRIAVLNRGSLIAIGSSQELKSLYGNNYTMTLSLYEPNQRDMVVQLVQTRLPNSVLKTTSTNKTLNLKWQIPKEKEDCWSAKFEMVQALAKDLGVKDFILAQSSLEETFLRLAGLDEDQLDTHSTVEISHSTHV.

A helical transmembrane segment spans residues 23–43; that stretch reads VWTLFELIIPCLLLGPLVYLV. Asparagine 126 and asparagine 145 each carry an N-linked (GlcNAc...) asparagine glycan. 3 helical membrane passes run 256–276, 306–326, and 334–354; these read AFIDFFPFIWAFVTFINVIHI, VVMAFLKFFVIFLCSIIPLTF, and AALIVTVLMYGLGAVIFGAFV. An N-linked (GlcNAc...) asparagine glycan is attached at asparagine 359. Transmembrane regions (helical) follow at residues 362 to 382 and 389 to 409; these read NSAIKAILVAWGAMIGISYKL and ISSCFLYGLNINGAFALAVEA. 2 N-linked (GlcNAc...) asparagine glycosylation sites follow: asparagine 421 and asparagine 427. The helical transmembrane segment at 436–456 threads the bilayer; sequence GWALVMMIVDILWMSIGALVV. N-linked (GlcNAc...) asparagine glycosylation occurs at asparagine 481. The tract at residues 511–536 is disordered; that stretch reads NPMASTSLNPPNADSDSLLEGSTEAD. Residues 512–525 show a composition bias toward polar residues; it reads PMASTSLNPPNADS. An ABC transporter 1 domain is found at 546 to 777; that stretch reads IIVRNLVKIW…FGTGYLLTVV (232 aa). Residue 580-587 participates in ATP binding; that stretch reads GHNGAGKS. N-linked (GlcNAc...) asparagine glycans are attached at residues asparagine 678, asparagine 727, and asparagine 899. 2 stretches are compositionally biased toward polar residues: residues 888–902 and 911–921; these read RQNSRISHNSRNASE and DTQSSTKSADS. Residues 888-933 form a disordered region; it reads RQNSRISHNSRNASEPSLKPAGYDTQSSTKSADSYQKLMDSQARGP. A helical transmembrane segment spans residues 963 to 983; it reads LFTQVLIPIILLGLVGSLTTL. 3 N-linked (GlcNAc...) asparagine glycosylation sites follow: asparagine 986, asparagine 1012, and asparagine 1045. Transmembrane regions (helical) follow at residues 1126–1146, 1153–1173, 1176–1196, 1201–1221, 1234–1254, 1266–1286, and 1311–1331; these read LAPMLILIFAMVTSTFVMFLI, FAHQQFLTGISPITFYSASLI, GILYSLICLIFLFMFLAFHWM, AIVILFWFLYFFSSVPFIYAV, LLIIWQVVISGAALLAVFLIF, ILVNIFMFLLPSYAFGSAIIT, and LMGTFGVCSFALFVLLQFKFV. The ABC transporter 2 domain occupies 1379–1603; it reads LVIKDLTKTF…YGNNYTMTLS (225 aa). An ATP-binding site is contributed by 1411 to 1418; the sequence is GVNGAGKT. N-linked (GlcNAc...) asparagine glycosylation is found at asparagine 1597 and asparagine 1632.

The protein belongs to the ABC transporter superfamily. ABCA family. As to expression, ubiquitous in embryos. Expressed in larval germline precursors. Expression in larvae and adults is seen in amphid sheath cells, pharyngeal-intestinal valve and phasmid sheath cells. Low levels of expression are also seen in gonadal sheath cells.

The protein localises to the membrane. Functions in the engulfment of cell corpses during embryonic programmed cell death to translocate molecules that mediate homotypic adhesion between cell surfaces of the dying and engulfing cells. This is ABC transporter ced-7 (ced-7) from Caenorhabditis elegans.